The following is a 395-amino-acid chain: Flap endonuclease 1 (395 aa).

An N-domain region spans residues 1-104; that stretch reads MGIKHLFQVI…GELAKRTARK (104 aa). Position 34 (Asp-34) interacts with Mg(2+). Arg-47 and Arg-70 together coordinate DNA. Residues Asp-86, Glu-158, Glu-160, Asp-179, and Asp-181 each contribute to the Mg(2+) site. The tract at residues 122–253 is I-domain; it reads EIEKFSRRTV…NTALKLIREH (132 aa). A DNA-binding site is contributed by Glu-158. DNA-binding residues include Gly-231 and Asp-233. Mg(2+) is bound at residue Asp-233. The tract at residues 341–349 is interaction with PCNA; the sequence is QQSRLEGFF. Residues 356–389 show a composition bias toward basic and acidic residues; that stretch reads DAEKASLKRKHDEKLQEQKKRKKEEAKAKKEAKA. A disordered region spans residues 356-395; it reads DAEKASLKRKHDEKLQEQKKRKKEEAKAKKEAKAKPRGAA.

The protein belongs to the XPG/RAD2 endonuclease family. FEN1 subfamily. In terms of assembly, interacts with PCNA. Three molecules of fen1 bind to one PCNA trimer with each molecule binding to one PCNA monomer. PCNA stimulates the nuclease activity without altering cleavage specificity. Requires Mg(2+) as cofactor. In terms of processing, phosphorylated. Phosphorylation upon DNA damage induces relocalization to the nuclear plasma.

Its subcellular location is the nucleus. It is found in the nucleolus. The protein localises to the nucleoplasm. The protein resides in the mitochondrion. Functionally, structure-specific nuclease with 5'-flap endonuclease and 5'-3' exonuclease activities involved in DNA replication and repair. During DNA replication, cleaves the 5'-overhanging flap structure that is generated by displacement synthesis when DNA polymerase encounters the 5'-end of a downstream Okazaki fragment. It enters the flap from the 5'-end and then tracks to cleave the flap base, leaving a nick for ligation. Also involved in the long patch base excision repair (LP-BER) pathway, by cleaving within the apurinic/apyrimidinic (AP) site-terminated flap. Acts as a genome stabilization factor that prevents flaps from equilibrating into structures that lead to duplications and deletions. Also possesses 5'-3' exonuclease activity on nicked or gapped double-stranded DNA, and exhibits RNase H activity. Also involved in replication and repair of rDNA and in repairing mitochondrial DNA. This Aspergillus clavatus (strain ATCC 1007 / CBS 513.65 / DSM 816 / NCTC 3887 / NRRL 1 / QM 1276 / 107) protein is Flap endonuclease 1 (fen1).